Reading from the N-terminus, the 325-residue chain is MGFVKVVKNKQYFKRYQVRFRRRREGKTDYYARKRLIFQDKNKYNTPKFRLIVRLSNRDITCQIAYARIEGDRIVCAAYSHELPRYGVKVGLTNYAAAYCTGLLVARRILQKLRLDTLYAGCTDVTGEEYLVEPVDEGPAAFRCYLDVGLARTTTGARVFGAMKGAVDGGLNIPHSVKRFPGYSAENKSFNAEMHRDHIFGLHVANYMRTLEEEDEEAFKRQFSKYISLGIKADDIENIYKNAHASIRIPPSRRNPRRRSPRSGGRWPSCRSPPARRRSRSTRPTSWPRSRPTSKPKRPRRRRPFFFSSWWCIILVLPCSSPVRR.

Residues 247–300 form a disordered region; it reads IRIPPSRRNPRRRSPRSGGRWPSCRSPPARRRSRSTRPTSWPRSRPTSKPKRPR. Low complexity-rich tracts occupy residues 262–273 and 282–291; these read RSGGRWPSCRSP and TRPTSWPRSR.

It belongs to the universal ribosomal protein uL18 family. As to quaternary structure, component of the large ribosomal subunit (LSU).

It localises to the cytoplasm. It is found in the nucleus. Its function is as follows. Component of the ribosome, a large ribonucleoprotein complex responsible for the synthesis of proteins in the cell. The small ribosomal subunit (SSU) binds messenger RNAs (mRNAs) and translates the encoded message by selecting cognate aminoacyl-transfer RNA (tRNA) molecules. The large subunit (LSU) contains the ribosomal catalytic site termed the peptidyl transferase center (PTC), which catalyzes the formation of peptide bonds, thereby polymerizing the amino acids delivered by tRNAs into a polypeptide chain. The nascent polypeptides leave the ribosome through a tunnel in the LSU and interact with protein factors that function in enzymatic processing, targeting, and the membrane insertion of nascent chains at the exit of the ribosomal tunnel. The sequence is that of Large ribosomal subunit protein uL18 (RpL5) from Anopheles gambiae (African malaria mosquito).